We begin with the raw amino-acid sequence, 110 residues long: Parvalbumin alpha (110 aa).

2 EF-hand domains span residues 39-74 (KGPD…FTPN) and 78-110 (LSVK…VSES). Positions 52, 54, 56, 58, 60, 63, 91, 93, 95, 97, and 102 each coordinate Ca(2+).

It belongs to the parvalbumin family.

In terms of biological role, in muscle, parvalbumin is thought to be involved in relaxation after contraction. It binds two calcium ions. The sequence is that of Parvalbumin alpha from Aquarana catesbeiana (American bullfrog).